The chain runs to 205 residues: Thymidine kinase (205 aa).

Residues 9 to 16 (SAMNAGKS) and 87 to 90 (DESQ) contribute to the ATP site. Glu88 acts as the Proton acceptor in catalysis. Cys145, Cys147, Cys182, and His185 together coordinate Zn(2+).

It belongs to the thymidine kinase family. Homotetramer.

Its subcellular location is the cytoplasm. The catalysed reaction is thymidine + ATP = dTMP + ADP + H(+). This Salmonella choleraesuis (strain SC-B67) protein is Thymidine kinase.